The sequence spans 288 residues: Peroxisomal membrane protein pex13 (288 aa).

A disordered region spans residues 1–32 (METNQNEKGPSLPSYPAGGIMSVSNSNADTNQ). Positions 22-32 (SVSNSNADTNQ) are enriched in polar residues. The helical transmembrane segment at 178-198 (IYSIVSSLAIILGLVGLPYAI) threads the bilayer. One can recognise an SH3 domain in the interval 222–288 (DSLEFCKADY…PSNYCSIISR (67 aa)).

It belongs to the peroxin-13 family. In terms of assembly, interacts (via SH3 domain) with PEX14 (via SH3-binding motif); forming the PEX13-PEX14 docking complex.

It localises to the peroxisome membrane. In terms of biological role, component of the PEX13-PEX14 docking complex, a translocon channel that specifically mediates the import of peroxisomal cargo proteins bound to PEX5 receptor. The PEX13-PEX14 docking complex forms a large import pore which can be opened to a diameter of about 9 nm. Mechanistically, PEX5 receptor along with cargo proteins associates with the PEX14 subunit of the PEX13-PEX14 docking complex in the cytosol, leading to the insertion of the receptor into the organelle membrane with the concomitant translocation of the cargo into the peroxisome matrix. In Schizosaccharomyces pombe (strain 972 / ATCC 24843) (Fission yeast), this protein is Peroxisomal membrane protein pex13 (pex13).